A 517-amino-acid chain; its full sequence is Protein BTN1 (517 aa).

Transmembrane regions (helical) follow at residues 24 to 44 (LFAA…IILS), 57 to 77 (GVVA…WPLL), 88 to 108 (VGFC…SSSL), 112 to 132 (LLGI…FLQL), 146 to 166 (LGAW…IWWL), 169 to 189 (GLGV…FPIT), 371 to 391 (PAII…TFFF), and 409 to 429 (SITI…SGYV).

Belongs to the battenin family.

The protein resides in the vacuole membrane. Its function is as follows. Involved in vacuolar transport and vacuole pH homeostasis. Also required for cytokinesis. The sequence is that of Protein BTN1 (BTN1) from Cryptococcus neoformans var. neoformans serotype D (strain B-3501A) (Filobasidiella neoformans).